We begin with the raw amino-acid sequence, 209 residues long: N-(5'-phosphoribosyl)anthranilate isomerase (209 aa).

This sequence belongs to the TrpF family.

The catalysed reaction is N-(5-phospho-beta-D-ribosyl)anthranilate = 1-(2-carboxyphenylamino)-1-deoxy-D-ribulose 5-phosphate. It participates in amino-acid biosynthesis; L-tryptophan biosynthesis; L-tryptophan from chorismate: step 3/5. This chain is N-(5'-phosphoribosyl)anthranilate isomerase, found in Granulibacter bethesdensis (strain ATCC BAA-1260 / CGDNIH1).